Consider the following 944-residue polypeptide: ATP-dependent RNA helicase DDX42 (944 aa).

The span at 1–18 shows a compositional bias: gly residues; that stretch reads MNWNKGGPGTKRGFGFGG. 3 disordered regions span residues 1–119, 131–155, and 182–203; these read MNWN…LEAF, MKRL…EEED, and EYDS…LPPI. Positions 35-52 are enriched in low complexity; the sequence is SHSAFGTAGSSAAFAKSG. The segment covering 70 to 84 has biased composition (acidic residues); that stretch reads DEENAYFEDEEEDNS. A coiled-coil region spans residues 120-157; that stretch reads MAEVEDQAARDMKRLEDKDKEKKNAKGIRDDIEEEDDQ. The segment covering 131 to 149 has biased composition (basic and acidic residues); the sequence is MKRLEDKDKEKKNAKGIRD. The Q motif motif lies at 253–281; sequence SSFARFGFDEQLMHQIRKSEYTQPTPIQC. The 176-residue stretch at 284-459 folds into the Helicase ATP-binding domain; the sequence is VPVAMSGRDM…RDILIDPIRV (176 aa). 297-304 contacts ATP; the sequence is AKTGSGKT. The DEAD box signature appears at 407-410; that stretch reads DEAD. A Helicase C-terminal domain is found at 487–632; that stretch reads WLTRRLVEFT…HVSKELLDLA (146 aa). Disordered regions lie at residues 642-682, 723-753, and 794-944; these read RFKG…VMSN, GSSA…AANP, and SANA…RWDS. Positions 723–737 are enriched in low complexity; it reads GSSAAGASGWTSAGS. Over residues 738-752 the composition is skewed to polar residues; that stretch reads LNSVPTSSAQQNAAN. Low complexity predominate over residues 794–814; that stretch reads SANASAGNREGVGSAGSAPRG. Gly residues predominate over residues 815-824; it reads GSSGGGGGGI. Basic and acidic residues-rich tracts occupy residues 825–887 and 901–926; these read VRER…RHFT and NISE…DNKT.

Belongs to the DEAD box helicase family. DDX42 subfamily. In terms of assembly, transient component of the SF3B subcomplex of the 17S U2 SnRNP complex.

The protein resides in the cytoplasm. It localises to the nucleus. The catalysed reaction is ATP + H2O = ADP + phosphate + H(+). Its function is as follows. ATP-dependent RNA helicase that binds to partially double-stranded RNAs (dsRNAs) in order to unwind RNA secondary structures. Unwinding is promoted in the presence of single-strand binding proteins. Also mediates RNA duplex formation thereby displacing the single-strand RNA binding protein. ATP and ADP modulate its activity: ATP binding and hydrolysis by DDX42 triggers RNA strand separation, whereas the ADP-bound form of the protein triggers annealing of complementary RNA strands. Required for assembly of the 17S U2 SnRNP complex of the spliceosome, a large ribonucleoprotein complex that removes introns from transcribed pre-mRNAs: DDX42 associates transiently with the SF3B subcomplex of the 17S U2 SnRNP complex and is released after fulfilling its role in the assembly of 17S U2 SnRNP. This Gallus gallus (Chicken) protein is ATP-dependent RNA helicase DDX42 (DDX42).